We begin with the raw amino-acid sequence, 224 residues long: Probable GTP-binding protein EngB (224 aa).

The 174-residue stretch at Val31–Pro204 folds into the EngB-type G domain. Residues Gly39–Ser46, Gly65–Leu69, Asp83–Gly86, Thr150–Asp153, and Phe183–Ser185 each bind GTP. Residues Ser46 and Thr67 each contribute to the Mg(2+) site.

It belongs to the TRAFAC class TrmE-Era-EngA-EngB-Septin-like GTPase superfamily. EngB GTPase family. It depends on Mg(2+) as a cofactor.

Necessary for normal cell division and for the maintenance of normal septation. The polypeptide is Probable GTP-binding protein EngB (Shewanella piezotolerans (strain WP3 / JCM 13877)).